Reading from the N-terminus, the 236-residue chain is uncharacterized protein (236 aa).

The region spanning 1–69 (MLKYQQIATE…RGSGIFVRKH (69 aa)) is the HTH gntR-type domain. The segment at residues 29–48 (LETLMAQFEVSKSTITKSLE) is a DNA-binding region (H-T-H motif).

This is an uncharacterized protein from Bacillus subtilis (strain 168).